The chain runs to 426 residues: Growth-regulating factor 9 (426 aa).

The QLQ domain maps to 92-127 (PFTPSQWMELEHQALIYKYLNAKAPIPSSLLISISK). Residues 151–195 (DPEPGRCRRTDGKKWRCSKEAMADHKYCERHINRNRHRSRKPVEN) enclose the WRC domain. 2 short sequence motifs (bipartite nuclear localization signal) span residues 156 to 166 (RCRRTDGKKWR) and 184 to 191 (RNRHRSRK). A disordered region spans residues 184–222 (RNRHRSRKPVENQSRKTVKETPCAGSLPSSVGQGSFKKA). Basic and acidic residues predominate over residues 191-202 (KPVENQSRKTVK).

It belongs to the GRF family.

The protein localises to the nucleus. In terms of biological role, transcription activator that plays a regulatory role in gibberellin-induced stem elongation. The chain is Growth-regulating factor 9 (GRF9) from Oryza sativa subsp. japonica (Rice).